The chain runs to 593 residues: Tyrosine-protein phosphatase non-receptor type 9 (593 aa).

Methionine 1 carries the post-translational modification N-acetylmethionine. A disordered region spans residues 1 to 20; it reads MEPATAPRPDMAPELTPEEE. In terms of domain architecture, CRAL-TRIO spans 84–243; sequence EEPLRSEILS…NLGGYVKIDL (160 aa). The Tyrosine-protein phosphatase domain occupies 303-574; the sequence is IYEEYEDIRR…YFCYKAILEF (272 aa). The Phosphocysteine intermediate role is filled by cysteine 515.

The protein belongs to the protein-tyrosine phosphatase family. Non-receptor class 3 subfamily.

The protein localises to the cytoplasm. It carries out the reaction O-phospho-L-tyrosyl-[protein] + H2O = L-tyrosyl-[protein] + phosphate. Functionally, protein-tyrosine phosphatase that could participate in the transfer of hydrophobic ligands or in functions of the Golgi apparatus. This chain is Tyrosine-protein phosphatase non-receptor type 9 (Ptpn9), found in Mus musculus (Mouse).